The primary structure comprises 209 residues: Large ribosomal subunit protein bL25 (209 aa).

Belongs to the bacterial ribosomal protein bL25 family. CTC subfamily. Part of the 50S ribosomal subunit; part of the 5S rRNA/L5/L18/L25 subcomplex. Contacts the 5S rRNA. Binds to the 5S rRNA independently of L5 and L18.

Functionally, this is one of the proteins that binds to the 5S RNA in the ribosome where it forms part of the central protuberance. This is Large ribosomal subunit protein bL25 from Xanthomonas campestris pv. campestris (strain B100).